We begin with the raw amino-acid sequence, 1165 residues long: Tectonin beta-propeller repeat-containing protein 1 (1165 aa).

TECPR repeat units lie at residues Leu209 to Asp240, Asp254 to Glu285, Ser301 to Val332, and Asp344 to Val376. Residues Arg404–Pro486 are disordered. Residues Lys611–Cys717 form the PH domain. One copy of the TECPR 5 repeat lies at Gln729–Leu756. Ser938 and Ser949 each carry phosphoserine. 4 TECPR repeats span residues Ile953–Gly984, Tyr998–Pro1029, Thr1044–Ser1075, and Asp1087–Ile1127. Residues Ala1140–Cys1165 form a disordered region. A compositionally biased stretch (low complexity) spans Ala1143 to Pro1153.

Belongs to the TECPR1 family. Interacts with ATG5; the interaction is direct. Interacts with WIPI2. Interacts with the ATG5-ATG12 conjugate, the interaction is however mutually exclusive with ATG16, since it does not interact with ATG12-ATG5-ATG16 complex.

Its subcellular location is the cytoplasmic vesicle. The protein localises to the autophagosome membrane. It localises to the lysosome membrane. Tethering factor involved in autophagy. Involved in autophagosome maturation by promoting the autophagosome fusion with lysosomes: acts by associating with both the ATG5-ATG12 conjugate and phosphatidylinositol-3-phosphate (PtdIns(3)P) present at the surface of autophagosomes. Also involved in selective autophagy against bacterial pathogens, by being required for phagophore/preautophagosomal structure biogenesis and maturation. The polypeptide is Tectonin beta-propeller repeat-containing protein 1 (TECPR1) (Pongo abelii (Sumatran orangutan)).